The chain runs to 116 residues: Large ribosomal subunit protein uL22 (116 aa).

It belongs to the universal ribosomal protein uL22 family. As to quaternary structure, part of the 50S ribosomal subunit.

Functionally, this protein binds specifically to 23S rRNA; its binding is stimulated by other ribosomal proteins, e.g. L4, L17, and L20. It is important during the early stages of 50S assembly. It makes multiple contacts with different domains of the 23S rRNA in the assembled 50S subunit and ribosome. Its function is as follows. The globular domain of the protein is located near the polypeptide exit tunnel on the outside of the subunit, while an extended beta-hairpin is found that lines the wall of the exit tunnel in the center of the 70S ribosome. The protein is Large ribosomal subunit protein uL22 of Wolbachia pipientis subsp. Culex pipiens (strain wPip).